The sequence spans 146 residues: Protein SprT-like (146 aa).

Positions 6 to 141 (YVKTVSIEDF…GCGLCQGKLI (136 aa)) constitute a SprT-like domain. His-64 contributes to the Zn(2+) binding site. Glu-65 is a catalytic residue. Residue His-68 coordinates Zn(2+).

The protein belongs to the SprT family. The cofactor is Zn(2+).

Its subcellular location is the cytoplasm. The protein is Protein SprT-like of Streptococcus thermophilus (strain CNRZ 1066).